Reading from the N-terminus, the 328-residue chain is MEKNYYALAYYYFGPVSNPHEEIALHKQLFKTMDVSCRIYISEEGINGQFSGYQPDAERYMAWLKQRPDFATVKFKIHHIKENVFPRVTVKYRKELVALGCSVDTSKQGKHISPEEWHEKLQENRCLVLDVRNNYEWKIGHFENAVLPDIETFREFPAYADRLAQEHAPETTPVMMYCTGGIRCELYSALLLEKGFKEVYQLDGGVIAYGLKMGTGKWKGKLFVFDDRMAVPINEADPNVSPISKCSLCDIESDTYYNCANTDCNNLFLCCESCITSQKGCCSEECSQAPRIRTFSAERGNKPFRRKHLCPTIEQTRCCLREKDNQPA.

Positions 122 to 218 (QENRCLVLDV…YGLKMGTGKW (97 aa)) constitute a Rhodanese domain. The Cysteine persulfide intermediate role is filled by Cys178.

This sequence belongs to the TrhO family.

The enzyme catalyses uridine(34) in tRNA + AH2 + O2 = 5-hydroxyuridine(34) in tRNA + A + H2O. Functionally, catalyzes oxygen-dependent 5-hydroxyuridine (ho5U) modification at position 34 in tRNAs. The protein is tRNA uridine(34) hydroxylase of Chlamydia muridarum (strain MoPn / Nigg).